A 79-amino-acid polypeptide reads, in one-letter code: RNA-binding protein Hfq (79 aa).

Residues 10-69 (GPFLNALRKEHVPVSIYLVNGIKLQGNIESFDQYVVLLRNTVTQMVYKHAISTVVPARAV) enclose the Sm domain.

This sequence belongs to the Hfq family. As to quaternary structure, homohexamer.

In terms of biological role, RNA chaperone that binds small regulatory RNA (sRNAs) and mRNAs to facilitate mRNA translational regulation in response to envelope stress, environmental stress and changes in metabolite concentrations. Also binds with high specificity to tRNAs. The protein is RNA-binding protein Hfq of Cupriavidus necator (strain ATCC 17699 / DSM 428 / KCTC 22496 / NCIMB 10442 / H16 / Stanier 337) (Ralstonia eutropha).